Here is a 481-residue protein sequence, read N- to C-terminus: Polygalacturonase QRT3 (481 aa).

A signal peptide spans 1 to 27 (MELRKSQVAMPVFLAIMSLMVSQVVFA). PbH1 repeat units lie at residues 203 to 226 (SLRT…LVKS), 261 to 282 (GNDN…MVSG), and 356 to 377 (IRGV…QIVQ). Residues Asn415 and Asn455 are each glycosylated (N-linked (GlcNAc...) asparagine).

Belongs to the glycosyl hydrolase 28 family. In terms of tissue distribution, expressed in the tapetum cells in the anthers and in the ovules of open flowers.

It is found in the secreted. The protein localises to the cell wall. It carries out the reaction (1,4-alpha-D-galacturonosyl)n+m + H2O = (1,4-alpha-D-galacturonosyl)n + (1,4-alpha-D-galacturonosyl)m.. Functionally, polygalacturonase required for degrading the pollen mother cell wall during microspore development. The sequence is that of Polygalacturonase QRT3 (QRT3) from Arabidopsis thaliana (Mouse-ear cress).